The sequence spans 301 residues: Probable protein phosphatase 2C 4 (301 aa).

Over residues 1-18 the composition is skewed to polar residues; the sequence is MGPYLSQPNKNKTTTSGE. A disordered region spans residues 1–20; that stretch reads MGPYLSQPNKNKTTTSGEGK. One can recognise a PPM-type phosphatase domain in the interval 23–298; that stretch reads IFAASEMQGW…DNMTTLIIYL (276 aa). Mn(2+)-binding residues include D57, G58, D237, and D289.

It belongs to the PP2C family. Mg(2+) serves as cofactor. Requires Mn(2+) as cofactor.

It localises to the membrane. The catalysed reaction is O-phospho-L-seryl-[protein] + H2O = L-seryl-[protein] + phosphate. It carries out the reaction O-phospho-L-threonyl-[protein] + H2O = L-threonyl-[protein] + phosphate. Functionally, enzyme with a broad specificity. In Paramecium tetraurelia, this protein is Probable protein phosphatase 2C 4.